A 153-amino-acid chain; its full sequence is Small ribosomal subunit protein bS6 (153 aa).

Residues 94–153 (EAHEEGPSAMMQKRDRDDRPRRDGDRPDRGDRGDRGDRGPREGGRESFGDRPRRPREDRA) form a disordered region.

This sequence belongs to the bacterial ribosomal protein bS6 family.

In terms of biological role, binds together with bS18 to 16S ribosomal RNA. This chain is Small ribosomal subunit protein bS6, found in Allorhizobium ampelinum (strain ATCC BAA-846 / DSM 112012 / S4) (Agrobacterium vitis (strain S4)).